The sequence spans 156 residues: Dynein 16 kDa light chain, flagellar outer arm (156 aa).

The Thioredoxin domain occupies 2–116 (AAGLPPVQYS…LNQQVLSLTP (115 aa)). A disulfide bridge connects residues cysteine 37 and cysteine 40.

As to quaternary structure, consists of at least 3 heavy chains (alpha, beta and gamma), 2 intermediate chains and 8 light chains.

The protein resides in the cell projection. It is found in the cilium. It localises to the flagellum. Its subcellular location is the cytoplasm. The protein localises to the cytoskeleton. The protein resides in the flagellum axoneme. Functionally, may be involved in regulating the redox state of functionally important thiol groups within dynein. This is Dynein 16 kDa light chain, flagellar outer arm from Chlamydomonas reinhardtii (Chlamydomonas smithii).